A 403-amino-acid polypeptide reads, in one-letter code: Tryptophan 2,3-dioxygenase (403 aa).

A substrate-binding site is contributed by 69–73 (FIVIH). Residues 133–135 (PLD) carry the PLD motif; required for enzymatic activity motif. Arg140 is a binding site for substrate. A heme-binding site is contributed by His327. Thr341 lines the substrate pocket.

Belongs to the tryptophan 2,3-dioxygenase family. Homotetramer. Dimer of dimers. It depends on heme as a cofactor. Expressed in body wall muscle cells, hypodermis, PLM neurons and touch-receptor neurons.

It carries out the reaction L-tryptophan + O2 = N-formyl-L-kynurenine. The protein operates within amino-acid degradation; L-tryptophan degradation via kynurenine pathway; L-kynurenine from L-tryptophan: step 1/2. Heme-dependent dioxygenase that catalyzes the oxidative cleavage of the L-tryptophan (L-Trp) pyrrole ring and converts L-tryptophan to N-formyl-L-kynurenine. Catalyzes the oxidative cleavage of the indole moiety. Involved in regulation of protein homeostasis, longevity and reproducive life span. Specifically regulates proteotoxicity due to age-related aggregation of proteins like alpha-synuclein, via its effects on tryptophan metabolism. The protein is Tryptophan 2,3-dioxygenase of Caenorhabditis elegans.